We begin with the raw amino-acid sequence, 365 residues long: Phosphatidylcholine:ceramide cholinephosphotransferase 2 (365 aa).

Positions 1 to 14 (MDIIETAKLEEHLE) are enriched in basic and acidic residues. The segment at 1–52 (MDIIETAKLEEHLENQPSDPTNTYTRPTEPVEEENKNGNGKPKSLSSGLRKG) is disordered. Residues 15 to 26 (NQPSDPTNTYTR) are compositionally biased toward polar residues. Helical transmembrane passes span 80–100 (GIAFIYAVFNLVLTTVMITVV), 128–148 (FSVSEINGIILVGLWITQWLF), 159–179 (FCFIIGTLYLYRCITMYVTTL), 218–240 (HILCGDFLFSGHTVTLTLTYLFI), and 248–268 (FWWYHLICWLLSAAGIICILV). The active site involves His229. Catalysis depends on residues His272 and Asp276. Residues 273–290 (YTVDVIIAYYITTRLFWW) traverse the membrane as a helical segment. The Cytoplasmic portion of the chain corresponds to 291–365 (YHSMANEKNL…KIGEDNEKST (75 aa)). 4 S-palmitoyl cysteine lipidation sites follow: Cys331, Cys332, Cys343, and Cys348.

This sequence belongs to the sphingomyelin synthase family. Palmitoylated on Cys-331, Cys-332, Cys-343 and Cys-348; which plays an important role in plasma membrane localization.

It localises to the cell membrane. It is found in the golgi apparatus membrane. The catalysed reaction is an N-acylsphing-4-enine + a 1,2-diacyl-sn-glycero-3-phosphocholine = a sphingomyelin + a 1,2-diacyl-sn-glycerol. It carries out the reaction an N-acylsphinganine + a 1,2-diacyl-sn-glycero-3-phosphocholine = an N-acylsphinganine-1-phosphocholine + a 1,2-diacyl-sn-glycerol. The enzyme catalyses an N-acyl-(4R)-4-hydroxysphinganine + a 1,2-diacyl-sn-glycero-3-phosphocholine = an N-acyl-(4R)-4-hydroxysphinganine-phosphocholine + a 1,2-diacyl-sn-glycerol. It catalyses the reaction an N-acylsphing-4-enine + a 1,2-diacyl-sn-glycero-3-phosphoethanolamine = an N-acylsphing-4-enine 1-phosphoethanolamine + a 1,2-diacyl-sn-glycerol. The catalysed reaction is an N-acylsphinganine + a 1,2-diacyl-sn-glycero-3-phosphoethanolamine = an N-acylsphinganine-1-phosphoethanolamine + a 1,2-diacyl-sn-glycerol. It carries out the reaction an N-acyl-(4R)-4-hydroxysphinganine + a 1,2-diacyl-sn-glycero-3-phosphoethanolamine = an N-acyl-(4R)-4-hydroxysphinganine-1-phosphoethanolamine + a 1,2-diacyl-sn-glycerol. The enzyme catalyses 1,2-dihexadecanoyl-sn-glycero-3-phosphocholine + an N-acylsphing-4-enine = 1,2-dihexadecanoyl-sn-glycerol + a sphingomyelin. It catalyses the reaction 1-(9Z-octadecenoyl)-2-acyl-sn-3-glycerol + a sphingomyelin = a 1-(9Z-octadecenoyl)-2-acyl-sn-glycero-3-phosphocholine + an N-acylsphing-4-enine. The catalysed reaction is N-hexadecanoylsphinganine + a 1,2-diacyl-sn-glycero-3-phosphocholine = N-hexadecanoyl-sphinganine-1-phosphocholine + a 1,2-diacyl-sn-glycerol. It carries out the reaction N-hexadecanoyl-(4R)-hydroxysphinganine + a 1,2-diacyl-sn-glycero-3-phosphocholine = N-hexadecanoyl-(4R)-hydroxysphinganine-phosphocholine + a 1,2-diacyl-sn-glycerol. The enzyme catalyses N-hexadecanoylsphinganine + a 1,2-diacyl-sn-glycero-3-phosphoethanolamine = N-hexadecanoyl-sphinganine-1-phosphoethanolamine + a 1,2-diacyl-sn-glycerol. It catalyses the reaction N-hexadecanoyl-(4R)-hydroxysphinganine + a 1,2-diacyl-sn-glycero-3-phosphoethanolamine = N-hexadecanoyl-(4R)-hydroxysphinganine-1-phosphoethanolamine + a 1,2-diacyl-sn-glycerol. Its pathway is sphingolipid metabolism. Functionally, sphingomyelin synthase that primarily contributes to sphingomyelin synthesis and homeostasis at the plasma membrane. Catalyzes the reversible transfer of phosphocholine moiety in sphingomyelin biosynthesis: in the forward reaction transfers phosphocholine head group of phosphatidylcholine (PC) on to ceramide (CER) to form ceramide phosphocholine (sphingomyelin, SM) and diacylglycerol (DAG) as by-product, and in the reverse reaction transfers phosphocholine from SM to DAG to form PC and CER. The direction of the reaction appears to depend on the levels of CER and DAG in the plasma membrane. Does not use free phosphorylcholine or CDP-choline as donors. Can also transfer phosphoethanolamine head group of phosphatidylethanolamine (PE) on to ceramide (CER) to form ceramide phosphoethanolamine (CPE). Regulates receptor-mediated signal transduction via mitogenic DAG and proapoptotic CER, as well as via SM, a structural component of membrane rafts that serve as platforms for signal transduction and protein sorting. To a lesser extent, plays a role in secretory transport via regulation of DAG pool at the Golgi apparatus and its downstream effects on PRKD1. Required for normal bone matrix mineralization. This chain is Phosphatidylcholine:ceramide cholinephosphotransferase 2 (SGMS2), found in Macaca fascicularis (Crab-eating macaque).